Here is a 291-residue protein sequence, read N- to C-terminus: ATP synthase gamma chain (291 aa).

It belongs to the ATPase gamma chain family. As to quaternary structure, F-type ATPases have 2 components, CF(1) - the catalytic core - and CF(0) - the membrane proton channel. CF(1) has five subunits: alpha(3), beta(3), gamma(1), delta(1), epsilon(1). CF(0) has three main subunits: a, b and c.

The protein localises to the cell inner membrane. In terms of biological role, produces ATP from ADP in the presence of a proton gradient across the membrane. The gamma chain is believed to be important in regulating ATPase activity and the flow of protons through the CF(0) complex. The chain is ATP synthase gamma chain from Aquifex aeolicus (strain VF5).